The primary structure comprises 367 residues: Peptide chain release factor 2 (367 aa).

Q247 is subject to N5-methylglutamine.

It belongs to the prokaryotic/mitochondrial release factor family. Post-translationally, methylated by PrmC. Methylation increases the termination efficiency of RF2.

The protein resides in the cytoplasm. In terms of biological role, peptide chain release factor 2 directs the termination of translation in response to the peptide chain termination codons UGA and UAA. This chain is Peptide chain release factor 2, found in Caulobacter sp. (strain K31).